Here is a 387-residue protein sequence, read N- to C-terminus: Succinate--CoA ligase [ADP-forming] subunit beta (387 aa).

In terms of domain architecture, ATP-grasp spans R9 to K236. Residues K45, G52–G54, A94, and E99 each bind ATP. Residues N191 and D205 each coordinate Mg(2+). Substrate is bound by residues N256 and G318 to T320.

It belongs to the succinate/malate CoA ligase beta subunit family. In terms of assembly, heterotetramer of two alpha and two beta subunits. Mg(2+) is required as a cofactor.

It carries out the reaction succinate + ATP + CoA = succinyl-CoA + ADP + phosphate. It catalyses the reaction GTP + succinate + CoA = succinyl-CoA + GDP + phosphate. It functions in the pathway carbohydrate metabolism; tricarboxylic acid cycle; succinate from succinyl-CoA (ligase route): step 1/1. Functionally, succinyl-CoA synthetase functions in the citric acid cycle (TCA), coupling the hydrolysis of succinyl-CoA to the synthesis of either ATP or GTP and thus represents the only step of substrate-level phosphorylation in the TCA. The beta subunit provides nucleotide specificity of the enzyme and binds the substrate succinate, while the binding sites for coenzyme A and phosphate are found in the alpha subunit. The protein is Succinate--CoA ligase [ADP-forming] subunit beta of Leifsonia xyli subsp. xyli (strain CTCB07).